A 435-amino-acid polypeptide reads, in one-letter code: Hyaluronidase-1 (435 aa).

An N-terminal signal peptide occupies residues 1–21; that stretch reads MAAHLLPICALFLTLLDMAQG. Intrachain disulfides connect Cys-43/Cys-333 and Cys-207/Cys-221. Residue Asn-99 is glycosylated (N-linked (GlcNAc...) asparagine). Glu-131 serves as the catalytic Proton donor. N-linked (GlcNAc...) asparagine glycosylation is found at Asn-216 and Asn-350. One can recognise an EGF-like domain in the interval 354 to 430; it reads GALLCSQALC…YPGWQAPWCE (77 aa). Intrachain disulfides connect Cys-358-Cys-369, Cys-363-Cys-418, and Cys-420-Cys-429.

It belongs to the glycosyl hydrolase 56 family. As to expression, highly expressed in the liver, kidney and heart. Weakly expressed in lung, placenta and skeletal muscle. No expression detected in adult brain. Isoform 1 is expressed only in bladder and prostate cancer cells, G2/G3 bladder tumor tissues and lymph node specimens showing tumor invasive tumors cells. Isoform 3, isoform 4, isoform 5 and isoform 6 are expressed in normal bladder and bladder tumor tissues.

It localises to the secreted. Its subcellular location is the lysosome. The catalysed reaction is Random hydrolysis of (1-&gt;4)-linkages between N-acetyl-beta-D-glucosamine and D-glucuronate residues in hyaluronate.. May have a role in promoting tumor progression. May block the TGFB1-enhanced cell growth. This is Hyaluronidase-1 (HYAL1) from Homo sapiens (Human).